Consider the following 191-residue polypeptide: Potassium-transporting ATPase KdpC subunit (191 aa).

The helical transmembrane segment at 6-26 threads the bilayer; that stretch reads PALVLFILLTLLTGGVYPLLT.

This sequence belongs to the KdpC family. In terms of assembly, the system is composed of three essential subunits: KdpA, KdpB and KdpC.

It localises to the cell inner membrane. In terms of biological role, part of the high-affinity ATP-driven potassium transport (or Kdp) system, which catalyzes the hydrolysis of ATP coupled with the electrogenic transport of potassium into the cytoplasm. This subunit acts as a catalytic chaperone that increases the ATP-binding affinity of the ATP-hydrolyzing subunit KdpB by the formation of a transient KdpB/KdpC/ATP ternary complex. The polypeptide is Potassium-transporting ATPase KdpC subunit (Klebsiella pneumoniae subsp. pneumoniae (strain ATCC 700721 / MGH 78578)).